The following is a 372-amino-acid chain: N-methyl-L-tryptophan oxidase (372 aa).

4 to 34 is an FAD binding site; it reads DLIIIGSGSVGAAAGYYATRAGLNVLMTDAH. C308 is modified (S-8alpha-FAD cysteine).

The protein belongs to the MSOX/MTOX family. MTOX subfamily. As to quaternary structure, monomer. It depends on FAD as a cofactor.

It carries out the reaction N(alpha)-methyl-L-tryptophan + O2 + H2O = L-tryptophan + formaldehyde + H2O2. In terms of biological role, catalyzes the oxidative demethylation of N-methyl-L-tryptophan. The protein is N-methyl-L-tryptophan oxidase of Escherichia coli O1:K1 / APEC.